Consider the following 249-residue polypeptide: Carbohydrate deacetylase (249 aa).

Mg(2+) is bound by residues His-60 and His-125.

It belongs to the YdjC deacetylase family. In terms of assembly, homodimer. It depends on Mg(2+) as a cofactor.

Its function is as follows. Probably catalyzes the deacetylation of acetylated carbohydrates an important step in the degradation of oligosaccharides. This is Carbohydrate deacetylase from Thermoanaerobacter pseudethanolicus (strain ATCC 33223 / 39E) (Clostridium thermohydrosulfuricum).